A 140-amino-acid polypeptide reads, in one-letter code: ATP synthase epsilon chain (140 aa).

The protein belongs to the ATPase epsilon chain family. F-type ATPases have 2 components, CF(1) - the catalytic core - and CF(0) - the membrane proton channel. CF(1) has five subunits: alpha(3), beta(3), gamma(1), delta(1), epsilon(1). CF(0) has three main subunits: a, b and c.

The protein localises to the cell inner membrane. In terms of biological role, produces ATP from ADP in the presence of a proton gradient across the membrane. The sequence is that of ATP synthase epsilon chain from Laribacter hongkongensis (strain HLHK9).